Here is a 387-residue protein sequence, read N- to C-terminus: Protein MGF 360-4L (387 aa).

It belongs to the asfivirus MGF 360 family.

Functionally, plays a role in virus cell tropism, and may be required for efficient virus replication in macrophages. The polypeptide is Protein MGF 360-4L (Ornithodoros (relapsing fever ticks)).